The sequence spans 488 residues: Glutamate synthase [NADPH] small chain (488 aa).

Residues 38 to 69 (ESLRQQATRCMDCGIPFCHNGCPLGNLIPEWN) form the 4Fe-4S ferredoxin-type domain.

It depends on [4Fe-4S] cluster as a cofactor.

It catalyses the reaction 2 L-glutamate + NADP(+) = L-glutamine + 2-oxoglutarate + NADPH + H(+). Its pathway is amino-acid biosynthesis; L-glutamate biosynthesis via GLT pathway; L-glutamate from 2-oxoglutarate and L-glutamine (NADP(+) route): step 1/1. This is Glutamate synthase [NADPH] small chain (gltD) from Mycobacterium tuberculosis (strain CDC 1551 / Oshkosh).